The following is a 317-amino-acid chain: Ricin B-like lectin EULS3 (317 aa).

Basic residues predominate over residues 1–11 (MEHHHQHHRHH). The interval 1 to 157 (MEHHHQHHRH…YHKPDENRLP (157 aa)) is disordered. Positions 25–36 (VPPPHVDAPPQP) are enriched in pro residues. The span at 136–146 (HSSNQPQSSSG) shows a compositional bias: polar residues. The region spanning 168-315 (TVKVYSKAEP…KGDNQLWKIF (148 aa)) is the Ricin B-type lectin domain.

Interacts (via N-terminus) with ATS3A and ATS3B. In terms of tissue distribution, expressed in roots, rosette leaves, stems, cauline leaves and flowers.

The protein resides in the nucleus. The protein localises to the cytoplasm. Its function is as follows. Lectin which binds carbohydrates in vitro. Interacts through its lectin domain with glycan structures containing one or more Lewis X, Lewis Y or lactosamine motifs. May play a role in abiotic stress responses. May play a role in abscisic acid-induced stomatal closure. May play a role in disease resistance against Pseudomonas syringae through its involvement in stomatal movement. The polypeptide is Ricin B-like lectin EULS3 (Arabidopsis thaliana (Mouse-ear cress)).